Reading from the N-terminus, the 246-residue chain is NAD-dependent protein deacylase (246 aa).

The 237-residue stretch at 1–237 (MSLPYRHVVI…PRLVEEILAA (237 aa)) folds into the Deacetylase sirtuin-type domain. 13–32 (GAGISAESGIQTFRAQDGLW) is a binding site for NAD(+). Substrate contacts are provided by Tyr57 and Arg60. 94–97 (QNID) contacts NAD(+). Residue His112 is the Proton acceptor of the active site. Zn(2+) is bound by residues Cys120 and Cys139. NAD(+) is bound by residues 179 to 181 (GTS), 205 to 207 (NLE), and Ala223.

It belongs to the sirtuin family. Class III subfamily. Zn(2+) serves as cofactor.

The protein resides in the cytoplasm. It carries out the reaction N(6)-acetyl-L-lysyl-[protein] + NAD(+) + H2O = 2''-O-acetyl-ADP-D-ribose + nicotinamide + L-lysyl-[protein]. The catalysed reaction is N(6)-succinyl-L-lysyl-[protein] + NAD(+) + H2O = 2''-O-succinyl-ADP-D-ribose + nicotinamide + L-lysyl-[protein]. Functionally, NAD-dependent lysine deacetylase and desuccinylase that specifically removes acetyl and succinyl groups on target proteins. Modulates the activities of several proteins which are inactive in their acylated form. This is NAD-dependent protein deacylase from Vibrio cholerae serotype O1 (strain ATCC 39315 / El Tor Inaba N16961).